Consider the following 282-residue polypeptide: Putative quercetin 2,3-dioxygenase VC_A0969 (282 aa).

A disordered region spans residues 1–21 (MTKDREIRQTVPAQPTSDGDG). Residues His59, His61, His103, and Glu105 each contribute to the a divalent metal cation site.

The protein belongs to the pirin family. The cofactor is a divalent metal cation.

The enzyme catalyses quercetin + O2 = 2-(3,4-dihydroxybenzoyloxy)-4,6-dihydroxybenzoate + CO. Its pathway is flavonoid metabolism; quercetin degradation. In terms of biological role, putative quercetin 2,3-dioxygenase. The polypeptide is Putative quercetin 2,3-dioxygenase VC_A0969 (Vibrio cholerae serotype O1 (strain ATCC 39315 / El Tor Inaba N16961)).